We begin with the raw amino-acid sequence, 882 residues long: Ubiquitin carboxyl-terminal hydrolase 4 (882 aa).

The Rhodanese domain maps to 182 to 308; it reads YDSSLLLIDV…WVSKKGACET (127 aa). Residues 382–399 are compositionally biased toward low complexity; sequence KAKSSSTSSVTSSSPAPS. A disordered region spans residues 382 to 411; the sequence is KAKSSSTSSVTSSSPAPSQLVRPQTSSMPP. Over residues 402–411 the composition is skewed to polar residues; it reads VRPQTSSMPP. In terms of domain architecture, USP spans 519–879; it reads VGLENMGNSC…NAYVLFYHRV (361 aa). The active-site Nucleophile is the Cys528. His836 functions as the Proton acceptor in the catalytic mechanism.

This sequence belongs to the peptidase C19 family.

It localises to the cytoplasm. It is found in the late endosome membrane. The catalysed reaction is Thiol-dependent hydrolysis of ester, thioester, amide, peptide and isopeptide bonds formed by the C-terminal Gly of ubiquitin (a 76-residue protein attached to proteins as an intracellular targeting signal).. Its activity is regulated as follows. RFU1 is an inhibitor of deubiquitination activity. Functionally, ubiquitin thioesterase that acts at the late endosome/prevacuolar compartment to recover ubiquitin from ubiquitinated membrane proteins en route to the vacuole. Also removes ubiquitin from soluble proteins targeted to proteasomes. Is essential to maintain a normal level of free ubiquitin. Required for promoting coordination of DNA replication and avoids DNA overreplication. This is Ubiquitin carboxyl-terminal hydrolase 4 (DOA4) from Vanderwaltozyma polyspora (strain ATCC 22028 / DSM 70294 / BCRC 21397 / CBS 2163 / NBRC 10782 / NRRL Y-8283 / UCD 57-17) (Kluyveromyces polysporus).